Reading from the N-terminus, the 397-residue chain is Dual specificity mitogen-activated protein kinase kinase 4 (397 aa).

The tract at residues 1–38 (MAAPSPSGGGGSGGGGGTPGPIGPPASGHPAVSSMQGK) is disordered. The residue at position 2 (Ala-2) is an N-acetylalanine. A compositionally biased stretch (gly residues) spans 7 to 20 (SGGGGSGGGGGTPG). Positions 35–50 (MQGKRKALKLNFANPP) are d domain. Residue Arg-56 is modified to Asymmetric dimethylarginine; alternate. Omega-N-methylarginine; alternate is present on Arg-56. Ser-88 is subject to Phosphoserine. The Protein kinase domain occupies 100 to 366 (LKDLGEIGRG…KELLKHPFIL (267 aa)). Residues 106-114 (IGRGAYGSV) and Lys-129 each bind ATP. Catalysis depends on Asp-227, which acts as the Proton acceptor. Ser-255 is subject to Phosphoserine. Phosphothreonine is present on Thr-259. Positions 362 to 385 (HPFILMYEERTVEVACYVCKILDQ) are DVD domain.

This sequence belongs to the protein kinase superfamily. STE Ser/Thr protein kinase family. MAP kinase kinase subfamily. Interacts with SPAG9. Interacts (via its D domain) with its substrates MAPK8/JNK1, MAPK9/JNK2, MAPK10/JNK3, MAPK11 and MAPK14. Interacts (via its DVD domain) with MAP3Ks activators like MAP3K1/MEKK1 and MAP3K11/MLK3. Interacts with ARRB1, ARRB2 and MAPK8IP3/JIP3. Activated by phosphorylation on Ser-255 and Thr-259 by MAP kinase kinase kinases (MAP3Ks). In terms of tissue distribution, strong expression is detected in most of the central nervous system and in liver and thymus during early stages of development. While expression in nervous system increases over time, expression in fetal liver and thymus gradually decreases as embryogenesis proceeds. High level of expression in the central nervous system persists throughout postnatal development and remained at a stable level in adult brain.

It localises to the cytoplasm. The protein resides in the nucleus. It catalyses the reaction L-seryl-[protein] + ATP = O-phospho-L-seryl-[protein] + ADP + H(+). It carries out the reaction L-threonyl-[protein] + ATP = O-phospho-L-threonyl-[protein] + ADP + H(+). The catalysed reaction is L-tyrosyl-[protein] + ATP = O-phospho-L-tyrosyl-[protein] + ADP + H(+). Activated in response to a variety of cellular stresses, including UV and gamma-irradiation, heat shock, hyperosmolarity, T-cell receptor stimulation, peroxide and inflammatory cytokines. Also activated by developmental cues. MAP2K4/MKK4 is activated by the majority of MKKKs, such as MAP3K5/ASK1, MAP3K1/MEKK1, MAP3K7/TAK1, MAP3K10/MLK2, MAP3K11/MLK3, MAP3K12/DLK and MAP3K13/LZK. Dual specificity protein kinase which acts as an essential component of the MAP kinase signal transduction pathway. Essential component of the stress-activated protein kinase/c-Jun N-terminal kinase (SAP/JNK) signaling pathway. With MAP2K7/MKK7, is the one of the only known kinase to directly activate the stress-activated protein kinase/c-Jun N-terminal kinases MAPK8/JNK1, MAPK9/JNK2 and MAPK10/JNK3. MAP2K4/MKK4 and MAP2K7/MKK7 both activate the JNKs by phosphorylation, but they differ in their preference for the phosphorylation site in the Thr-Pro-Tyr motif. MAP2K4 shows preference for phosphorylation of the Tyr residue and MAP2K7/MKK7 for the Thr residue. The phosphorylation of the Thr residue by MAP2K7/MKK7 seems to be the prerequisite for JNK activation at least in response to pro-inflammatory cytokines, while other stimuli activate both MAP2K4/MKK4 and MAP2K7/MKK7 which synergistically phosphorylate JNKs. MAP2K4 is required for maintaining peripheral lymphoid homeostasis. The MKK/JNK signaling pathway is also involved in mitochondrial death signaling pathway, including the release cytochrome c, leading to apoptosis. Whereas MAP2K7/MKK7 exclusively activates JNKs, MAP2K4/MKK4 additionally activates the p38 MAPKs MAPK11, MAPK12, MAPK13 and MAPK14. The chain is Dual specificity mitogen-activated protein kinase kinase 4 (Map2k4) from Mus musculus (Mouse).